Reading from the N-terminus, the 1474-residue chain is MGKRWLPSLALLPLPPPLLLLLLLLLPTNASAPQKPIYMVMVPSLLHAGTPEKGCLLFNHLNETVTVKVSMESVRGNQSLFTDLVVDKDLFHCASFIVPQSSSNEVMFLTVQVKGPTHEFRRRSTVLIKTKESLVFAQTDKPIYKPGQMVRFRVVSLDENFHPLNELIPLLYIQDSKKNRIAQWQNFRLEGGLKQLSFPLSSEPTQGSYKVVIRTESGRTVEHPFSVKEFVLPKFEVKVAVPETITILEEEMNVSVCGIYTYGKPVPGHVTVNICRKYSNPSSCFGEESLAFCEKFSQQLDGRGCFSQLVKTKSFQLKRQEYEMQLDVNAKIQEEGTGVEETGKGLTKITRTITKLSFVNVDTHFRQGIPFVGQVLLVDGRGTPIPYEMIFIGADEANQNINTTTDKNGLARFSINTDDIMGTSLTVRAKYKDSNVCYGFRWLTEENVEAWHTANAVFSPSRSFVHLESLPYKLRCEQTLAVQAHYILNDEAVLERKELVFYYLMMAKGGIVRAGTHVLPVTQGHKKGHFSILISMETDLAPVARLVLYTILPNGEVVGDTVKYEIEKCLANKVDLVFHPNIGLPATRAFLSVMASPQSLCGLRAVDQSVLLTKPEAELSASLVYDLLPVKDLTGFPKGVNQQEEDTNGCLKQNDTYINGILYSPVQNTNEEDMYGFLKDMGLKVFTNLNIRKPKVCERLGVNKIPAAYHLVSQGHMDAFLESSESPTETTRSYFPETWIWDLVIVDSTGVAEMEVTVPDTITEWKAGAFCLSNDTGLGLSPVIDFQAFQPFFVDLTMPYSVIRGEAFTLKATVLNYLQTCIRVGVQLEASPDFLATPEEKEQKSHCICMNERHTMSWAVIPKSLGNVNFTVSAEALDSKELCRNEVPVVPERGKKDTIIKSLLVEPEGLENEVTFNSLLCPTGAEVSEQISLKLPSDVVEESARASVTVLGDILGSAMQNTQDLLKMPYGCGEQNMVLFAPNIYVLDYLNETEQLTQEIKTKAITYLNTGYQRQLNYKHRDGSYSTFGDKPGRSHANTWLTAFVLKSFAQARRYIFIDESHITQALTWLSQQQKDNGCFRSSGSLLNNAMKGGVEDEVTLSAYITIALLEMSLPVTHPVVRNALFCLDTAWKSARRGASGNHVYTKALLAYAFALAGNQDTKKEILKSLDEEAVKEDNSVHWTRAQKPRVPADLWYQPQAPSAEVEMTAYVLLAYLTTELVPTREDLTAAMLIVKWLTKQQNSHGGFSSTQDTVVALHALSKYGAATFTRAKKAAHVTIQSSGAFYTKFQVNNDNQLLLQRVTLPTVPGDYTAKVAGEGCVYLQTSLKYSVLPREKEFPFALVVQTLPGTCEDLKAHTTFQISLNISYIGSRSDSNMAIADVKMVSGFIPLKPTVKMLERSVHVSRTEVSNNHVLIYLDKVSNQMLTLFFMVQQDIPVRDLKPAIVKVYDYYEKDEFAVAKYSAPCSAGYGNA.

Positions 1-32 are cleaved as a signal peptide; the sequence is MGKRWLPSLALLPLPPPLLLLLLLLLPTNASA. Cys-55 and Cys-93 are disulfide-bonded. N-linked (GlcNAc...) asparagine glycans are attached at residues Asn-62, Asn-77, and Asn-253. 2 cysteine pairs are disulfide-bonded: Cys-257–Cys-305 and Cys-275–Cys-293. N-linked (GlcNAc...) asparagine glycosylation occurs at Asn-402. Intrachain disulfides connect Cys-476-Cys-569, Cys-601-Cys-771, and Cys-650-Cys-697. A bait region region spans residues 623–752; it reads LVYDLLPVKD…LVIVDSTGVA (130 aa). N-linked (GlcNAc...) asparagine glycosylation is found at Asn-654 and Asn-774. Disulfide bonds link Cys-821–Cys-849, Cys-847–Cys-883, Cys-921–Cys-1321, Cys-1079–Cys-1127, and Cys-1352–Cys-1467. N-linked (GlcNAc...) asparagine glycosylation is present at Asn-869. The isoglutamyl cysteine thioester (Cys-Gln) cross-link spans 972 to 975; the sequence is CGEQ. N-linked (GlcNAc...) asparagine glycosylation occurs at Asn-991. N-linked (GlcNAc...) asparagine glycosylation occurs at Asn-1366.

Belongs to the protease inhibitor I39 (alpha-2-macroglobulin) family. Homotetramer; disulfide-linked. As to expression, expressed in uterus, mesometrial lymphoid aggregate and mammary tissue during pregnancy. Expressed in ovary, testis and kidney. Low level expression in heart. Not expressed in liver.

The protein resides in the secreted. Its function is as follows. Is able to inhibit all four classes of proteinases by a unique 'trapping' mechanism. This protein has a peptide stretch, called the 'bait region' which contains specific cleavage sites for different proteinases. When a proteinase cleaves the bait region, a conformational change is induced in the protein which traps the proteinase. The entrapped enzyme remains active against low molecular weight substrates (activity against high molecular weight substrates is greatly reduced). Following cleavage in the bait region a thioester bond is hydrolyzed and mediates the covalent binding of the protein to the proteinase. This chain is Alpha-2-macroglobulin-P, found in Mus musculus (Mouse).